The primary structure comprises 447 residues: Nacrein (447 aa).

The first 17 residues, 1–17 (MYLHLTALCVVIPLCYG), serve as a signal peptide directing secretion. Asn44 carries N-linked (GlcNAc...) asparagine glycosylation. One can recognise an Alpha-carbonic anhydrase domain in the interval 50-446 (AGFSYDRSIC…KNKVTVYKSF (397 aa)). Zn(2+) contacts are provided by His149, His151, and His174. The interval 218–329 (DEPDDEECKH…GENGHKHGCR (112 aa)) is disordered. Basic and acidic residues predominate over residues 224–236 (ECKHILKGHHPDN). A compositionally biased stretch (low complexity) spans 237 to 321 (NENGNGDNGN…NNGENGNNGE (85 aa)). 27 consecutive repeat copies span residues 242-244 (GDN), 245-247 (GNN), 248-250 (GYN), 251-253 (GDN), 254-256 (GNN), 257-259 (GDN), 260-262 (GNN), 263-265 (SYN), 266-268 (GDN), 269-271 (GNN), 272-274 (GVN), 275-277 (GNN), 278-280 (GYN), 281-283 (GDN), 284-286 (GNN), 287-289 (GDN), 290-292 (GNN), 293-295 (GYN), 296-298 (GDN), 299-301 (GNN), 302-304 (GDN), 305-307 (GNN), 308-310 (GEN), 311-313 (GNN), 314-316 (GEN), 317-318 (GN), and 320-322 (GEN). The tract at residues 242–322 (GDNGNNGYNG…NGENGNNGEN (81 aa)) is 27 X 3 AA approximate tandem repeats of G-X-N. Asn261 is a glycosylation site (N-linked (GlcNAc...) asparagine). 387–388 (TT) is a substrate binding site.

It belongs to the alpha-carbonic anhydrase family. In terms of assembly, homooligomer; disulfide-linked. May also be disulfide-linked to insoluble organic matrix. The cofactor is Zn(2+). In terms of processing, N-glycosylated. As to expression, expressed at whole regions of the mantle epithelium tissue. Is found in the aragonitic nacreous and calcitic prismatic and foliated layers.

Its subcellular location is the secreted. The protein resides in the extracellular space. It is found in the extracellular matrix. It catalyses the reaction hydrogencarbonate + H(+) = CO2 + H2O. In terms of biological role, acts as a negative regulator for calcification in the shells of mollusks. May function both as a calcium concentrator and as a carbonic anhydrase required for production of carbonate ions, which are assembled to CaCO(3) at mineralization sites. Is important for shell formation in both the calcitic prismatic layer and the aragonitic nacreous layer. The sequence is that of Nacrein from Pinctada fucata (Akoya pearl oyster).